We begin with the raw amino-acid sequence, 484 residues long: Tyramine receptor 1 (484 aa).

Topologically, residues 1–54 (MVRVELQAASLMNGSSAAEEPQDALVGGDACGGRRPPSVLGVRLAVPEWEVAVT) are extracellular. An N-linked (GlcNAc...) asparagine glycan is attached at Asn13. Residues 55–77 (AVSLSLIILITIVGNVLVVLSVF) form a helical membrane-spanning segment. Residues 78–87 (TYKPLRIVQN) are Cytoplasmic-facing. The chain crosses the membrane as a helical span at residues 88–109 (FFIVSLAVADLTVAVLVMPFNV). Over 110–126 (AYSLIQRWVFGIVVCKM) the chain is Extracellular. A disulfide bridge links Cys124 with Cys203. The helical transmembrane segment at 127–147 (WLTCDVLCCTASILNLCAIAL) threads the bilayer. Residues 148–167 (DRYWAITDPINYAQKRTLRR) are Cytoplasmic-facing. Residues 168 to 190 (VLAMIAGVWLLSGVISSPPLIGW) traverse the membrane as a helical segment. Over 191 to 215 (NDWPMEFNDTTPCQLTEEQGYVIYS) the chain is Extracellular. Residue Asn198 is glycosylated (N-linked (GlcNAc...) asparagine). A helical transmembrane segment spans residues 216 to 237 (SLGSFFIPLFIMTIVYVEIFIA). Over 238–411 (TKRRLRERAK…LSKERRAART (174 aa)) the chain is Cytoplasmic. The segment covering 253 to 280 (SAMKQQMAAQAVPSSVPSHDQESVSSET) has biased composition (polar residues). 2 disordered regions span residues 253 to 322 (SAMK…PAMV) and 358 to 383 (TTTA…PTPV). Residues 295-306 (EKRRKTKKKSKK) are compositionally biased toward basic residues. A compositionally biased stretch (polar residues) spans 361–378 (AVTDSPRSRTASQKGSTA). Residues 412–433 (LGIIMGVFVVCWLPFFLMYVIV) form a helical membrane-spanning segment. At 434-448 (PFCNPSCKPSPKLVN) the chain is on the extracellular side. Residues 449-470 (FITWLGYINSALNPIIYTIFNL) form a helical membrane-spanning segment. Residues 471-484 (DFRRAFKKLLHFKT) are Cytoplasmic-facing.

It belongs to the G-protein coupled receptor 1 family. In terms of tissue distribution, present mainly in the central nervous system, especially in the supra- and subesophageal, thoracic and abdominal ganglia. Not found in the distal part of optic lobes.

It is found in the cell membrane. In terms of biological role, G-protein coupled receptor for tyramine, a known neurotransmitter and neuromodulator and direct precursor of octopamine. The rank order of potency for agonists of this receptor is tyramine &gt; naphazoline &gt; tolazoline &gt; DL-octopamine &gt; dopamine &gt; epinephrine &gt; 5-hydroxytryptamine. For antagonists, the rank order is yohimbine &gt; chlorpromazine &gt; mianserin &gt; phentolamine &gt; metoclopramide. This Locusta migratoria (Migratory locust) protein is Tyramine receptor 1 (GCR1).